The following is a 381-amino-acid chain: Putative acyl-CoA dehydrogenase YdbM (381 aa).

FAD contacts are provided by residues 158–160 (FTT) and 337–341 (RIVGA).

Belongs to the acyl-CoA dehydrogenase family. Requires FAD as cofactor.

The sequence is that of Putative acyl-CoA dehydrogenase YdbM (ydbM) from Bacillus subtilis (strain 168).